A 581-amino-acid chain; its full sequence is Suppressor of cytokine signaling 7 (581 aa).

Disordered regions lie at residues 1–23 (MVFR…EPGP), 89–109 (PPPP…DPTE), 123–272 (EAES…RTQS), and 297–316 (QRGL…RRSL). Composition is skewed to pro residues over residues 89–99 (PPPPQPQPPAA), 154–164 (PPGPELPPVPF), and 187–198 (QPPPPPPPPGPL). The segment at 124-494 (AESLETNSCS…GKFLYFLRSR (371 aa)) is mediates interaction with SORBS3. Positions 208 to 219 (GSFKIRLSRLFR) are enriched in basic residues. The segment covering 303 to 313 (PHPPTPPPPPR) has biased composition (pro residues). An SH2 domain is found at 400-509 (WYWGPMNWED…PTPVQLLYPV (110 aa)). The 51-residue stretch at 504–554 (QLLYPVSRFSNVKSLQHLCRFRIRQLVRIDHIPDLPLPKPLISYIRKFYYY) folds into the SOCS box domain.

Substrate-recognition component of the ECS(SOCS7) complex, composed of SOCS7, CUL5, ELOB, ELOC and RNF7/RBX2. Interacts, via the third proline-rich region, with the second SH3 domain of the adapter protein NCK1. Also interacts with GRB2, INSR, PLCG1, SORBS3/vinexin, and phosphorylated STAT3 and STAT5. Interacts with SEPT6. Interacts with phosphorylated IRS4 and PIK3R1. Expressed in brain and leukocytes. Also in fetal lung fibroblasts and fetal brain.

It is found in the cytoplasm. The protein localises to the nucleus. Its subcellular location is the cell membrane. Its pathway is protein modification; protein ubiquitination. Functionally, substrate-recognition component of a cullin-5-RING E3 ubiquitin-protein ligase complex (ECS complex, also named CRL5 complex), which mediates the ubiquitination and subsequent proteasomal degradation of target proteins, such as DAB1 and IRS1. Specifically recognizes and binds phosphorylated proteins via its SH2 domain, promoting their ubiquitination. The ECS(SOCS7) complex acts as a key regulator of reelin signaling by mediating ubiquitination and degradation of phosphorylated DAB1 in the cortical plate of the developing cerebral cortex, thereby regulating neuron positioning during cortex development. Functions in insulin signaling and glucose homeostasis through IRS1 ubiquitination and subsequent proteasomal degradation. Also inhibits prolactin, growth hormone and leptin signaling by preventing STAT3 and STAT5 activation, sequestering them in the cytoplasm and reducing their binding to DNA. The polypeptide is Suppressor of cytokine signaling 7 (Homo sapiens (Human)).